The chain runs to 181 residues: Large ribosomal subunit protein uL5 (181 aa).

The protein belongs to the universal ribosomal protein uL5 family. As to quaternary structure, part of the 50S ribosomal subunit; part of the 5S rRNA/L5/L18/L25 subcomplex. Contacts the 5S rRNA and the P site tRNA. Forms a bridge to the 30S subunit in the 70S ribosome.

This is one of the proteins that bind and probably mediate the attachment of the 5S RNA into the large ribosomal subunit, where it forms part of the central protuberance. In the 70S ribosome it contacts protein S13 of the 30S subunit (bridge B1b), connecting the 2 subunits; this bridge is implicated in subunit movement. Contacts the P site tRNA; the 5S rRNA and some of its associated proteins might help stabilize positioning of ribosome-bound tRNAs. This chain is Large ribosomal subunit protein uL5, found in Sulfurimonas denitrificans (strain ATCC 33889 / DSM 1251) (Thiomicrospira denitrificans (strain ATCC 33889 / DSM 1251)).